The primary structure comprises 131 residues: Large ribosomal subunit protein bL17 (131 aa).

It belongs to the bacterial ribosomal protein bL17 family. Part of the 50S ribosomal subunit. Contacts protein L32.

The polypeptide is Large ribosomal subunit protein bL17 (Paraburkholderia phymatum (strain DSM 17167 / CIP 108236 / LMG 21445 / STM815) (Burkholderia phymatum)).